We begin with the raw amino-acid sequence, 444 residues long: Amino-acid acetyltransferase (444 aa).

In terms of domain architecture, N-acetyltransferase spans 295-434; sequence EKVRRANIND…QALYNYQRRS (140 aa).

Belongs to the acetyltransferase family. ArgA subfamily. As to quaternary structure, homohexamer.

The protein resides in the cytoplasm. The catalysed reaction is L-glutamate + acetyl-CoA = N-acetyl-L-glutamate + CoA + H(+). It functions in the pathway amino-acid biosynthesis; L-arginine biosynthesis; N(2)-acetyl-L-ornithine from L-glutamate: step 1/4. The sequence is that of Amino-acid acetyltransferase from Proteus mirabilis (strain HI4320).